We begin with the raw amino-acid sequence, 466 residues long: Eukaryotic translation initiation factor 3 subunit M (466 aa).

Positions 40–62 (EISPLLEPLRQQEQSDAEPDRKQ) are disordered. The PCI domain occupies 211 to 378 (AQTHILQALQ…SEFLVHRATY (168 aa)). Residues 424-466 (AAEEAAQGKSNDKGNKSGDRRQRHGNNQQSQQQQQPQEVAAAE) are disordered. Residues 433–443 (SNDKGNKSGDR) show a composition bias toward basic and acidic residues. Over residues 451 to 460 (QQSQQQQQPQ) the composition is skewed to low complexity.

Belongs to the eIF-3 subunit M family. As to quaternary structure, component of the eukaryotic translation initiation factor 3 (eIF-3) complex.

It localises to the cytoplasm. Component of the eukaryotic translation initiation factor 3 (eIF-3) complex, which is involved in protein synthesis of a specialized repertoire of mRNAs and, together with other initiation factors, stimulates binding of mRNA and methionyl-tRNAi to the 40S ribosome. The eIF-3 complex specifically targets and initiates translation of a subset of mRNAs involved in cell proliferation. This Aspergillus oryzae (strain ATCC 42149 / RIB 40) (Yellow koji mold) protein is Eukaryotic translation initiation factor 3 subunit M.